A 525-amino-acid polypeptide reads, in one-letter code: Glutathione hydrolase-like YwrD proenzyme (525 aa).

Thr339 acts as the Nucleophile in catalysis.

Belongs to the gamma-glutamyltransferase family. As to quaternary structure, this enzyme consists of two polypeptide chains, which are synthesized from a single polypeptide. Cleaved by autocatalysis into a large and a small subunit.

It carries out the reaction an N-terminal (5-L-glutamyl)-[peptide] + an alpha-amino acid = 5-L-glutamyl amino acid + an N-terminal L-alpha-aminoacyl-[peptide]. The catalysed reaction is glutathione + H2O = L-cysteinylglycine + L-glutamate. It catalyses the reaction an S-substituted glutathione + H2O = an S-substituted L-cysteinylglycine + L-glutamate. In terms of biological role, overexpressed protein with an N-terminal His tag has been reported not to hydrolyze glutathione; it is not clear if the construct is processed to 2 subunits. This chain is Glutathione hydrolase-like YwrD proenzyme (ywrD), found in Bacillus subtilis (strain 168).